A 248-amino-acid polypeptide reads, in one-letter code: uncharacterized protein (248 aa).

A helical transmembrane segment spans residues 7–25; it reads TIFIGGIYGLGVYIGAVAW.

Belongs to the methyltransferase superfamily. METL family.

The protein resides in the mitochondrion inner membrane. In terms of biological role, probable methyltransferase. This is an uncharacterized protein from Schizosaccharomyces pombe (strain 972 / ATCC 24843) (Fission yeast).